The primary structure comprises 559 residues: Leucine-rich repeat protein soc-2 (559 aa).

The segment covering 1 to 17 (METSKEFEFRPAKETSR) has biased composition (basic and acidic residues). The interval 1 to 55 (METSKEFEFRPAKETSRSKSPGGIVGRLSNFARNKARHSLSEKGSNSVGGSGGSG) is disordered. LRR repeat units lie at residues 74 to 95 (QDQR…IKEL), 97 to 118 (QLTE…IGQL), 120 to 141 (NLKK…LSSL), 143 to 164 (SLET…IYKI), 166 to 187 (SLET…IGNL), 189 to 210 (KLKM…IGKL), 212 to 233 (SLVV…IGEC), 235 to 257 (ALTQ…GKLT), 258 to 279 (NLVR…LESC), 281 to 302 (QLEE…LLTM), 305 to 326 (KIHT…GPQQ), 329 to 350 (PTVT…IFSK), 353 to 374 (RLTK…MGSW), 376 to 397 (SITE…IEKL), 399 to 420 (NLEI…IGNL), 422 to 443 (KLRE…IGFL), 445 to 466 (HLTK…IGNL), 468 to 489 (SLQD…IGHL), 491 to 513 (SLKS…LALC), and 515 to 536 (SLEI…ITAG).

This sequence belongs to the SHOC2 family. As to quaternary structure, interacts with let-60.

Its function is as follows. Acts as a Ras effector and participates in MAPK pathway activation. Probably acts as a scaffolding protein in a protein phosphatase complex that specifically dephosphorylates Raf kinase and stimulates Raf activity at specialized signaling complexes upon Ras activation. Required for vulval development. Involved in fluid homeostasis. Plays a role in nicotinic acetylcholine receptor (nAChR)-mediated sensitivity to nicotine. The polypeptide is Leucine-rich repeat protein soc-2 (soc-2) (Caenorhabditis briggsae).